The following is a 292-amino-acid chain: 4-hydroxy-tetrahydrodipicolinate synthase (292 aa).

Threonine 50 lines the pyruvate pocket. Residue tyrosine 139 is the Proton donor/acceptor of the active site. Residue lysine 167 is the Schiff-base intermediate with substrate of the active site. Residue isoleucine 208 coordinates pyruvate.

It belongs to the DapA family. Homotetramer; dimer of dimers.

Its subcellular location is the cytoplasm. The catalysed reaction is L-aspartate 4-semialdehyde + pyruvate = (2S,4S)-4-hydroxy-2,3,4,5-tetrahydrodipicolinate + H2O + H(+). The protein operates within amino-acid biosynthesis; L-lysine biosynthesis via DAP pathway; (S)-tetrahydrodipicolinate from L-aspartate: step 3/4. Its function is as follows. Catalyzes the condensation of (S)-aspartate-beta-semialdehyde [(S)-ASA] and pyruvate to 4-hydroxy-tetrahydrodipicolinate (HTPA). This Oenococcus oeni (strain ATCC BAA-331 / PSU-1) protein is 4-hydroxy-tetrahydrodipicolinate synthase.